The sequence spans 309 residues: Ribonuclease Z (309 aa).

Zn(2+) contacts are provided by histidine 63, histidine 65, aspartate 67, histidine 68, histidine 145, aspartate 216, and histidine 274. Residue aspartate 67 is the Proton acceptor of the active site.

This sequence belongs to the RNase Z family. As to quaternary structure, homodimer. It depends on Zn(2+) as a cofactor.

The enzyme catalyses Endonucleolytic cleavage of RNA, removing extra 3' nucleotides from tRNA precursor, generating 3' termini of tRNAs. A 3'-hydroxy group is left at the tRNA terminus and a 5'-phosphoryl group is left at the trailer molecule.. In terms of biological role, zinc phosphodiesterase, which displays some tRNA 3'-processing endonuclease activity. Probably involved in tRNA maturation, by removing a 3'-trailer from precursor tRNA. This chain is Ribonuclease Z, found in Streptococcus mutans serotype c (strain ATCC 700610 / UA159).